The primary structure comprises 463 residues: Fumarate hydratase class II (463 aa).

Substrate-binding positions include 97–99, 128–131, 138–140, and Thr186; these read SGT, HPND, and SSN. Residue His187 is the Proton donor/acceptor of the active site. The active site involves Ser317. Substrate-binding positions include Ser318 and 323-325; that span reads KVN.

Belongs to the class-II fumarase/aspartase family. Fumarase subfamily. In terms of assembly, homotetramer.

The protein resides in the cytoplasm. It carries out the reaction (S)-malate = fumarate + H2O. The protein operates within carbohydrate metabolism; tricarboxylic acid cycle; (S)-malate from fumarate: step 1/1. Its function is as follows. Involved in the TCA cycle. Catalyzes the stereospecific interconversion of fumarate to L-malate. This Helicobacter pylori (strain ATCC 700392 / 26695) (Campylobacter pylori) protein is Fumarate hydratase class II.